We begin with the raw amino-acid sequence, 185 residues long: Elongation factor P (185 aa).

The protein belongs to the elongation factor P family.

It localises to the cytoplasm. It participates in protein biosynthesis; polypeptide chain elongation. In terms of biological role, involved in peptide bond synthesis. Stimulates efficient translation and peptide-bond synthesis on native or reconstituted 70S ribosomes in vitro. Probably functions indirectly by altering the affinity of the ribosome for aminoacyl-tRNA, thus increasing their reactivity as acceptors for peptidyl transferase. In Nitratidesulfovibrio vulgaris (strain DSM 19637 / Miyazaki F) (Desulfovibrio vulgaris), this protein is Elongation factor P.